Consider the following 379-residue polypeptide: Transcription termination factor 1b, mitochondrial (379 aa).

The N-terminal 37 residues, 1–37, are a transit peptide targeting the mitochondrion; sequence MASRNIWCVRRNFLFDLRGWMLQYSAEVFLKSISFRT. Interaction with DNA stretches follow at residues 151–152, 229–233, 306–313, 337–340, and 366–373; these read RS, QSTKR, SEKKFNDK, SINT, and SQRRYEAK.

It belongs to the mTERF family. Monomer. In terms of processing, phosphoprotein with mostly four phosphate groups. While the DNA-binding activity is unaffected by the phosphorylation state, only the phosphorylated form of the protein is active for termination activity. Functioning seems to be regulated by phosphorylation. In terms of tissue distribution, expressed strongly in the heart and at lower levels in brain, liver and kidney.

The protein localises to the mitochondrion. Functionally, transcription termination factor. Binds to a 28 bp region within the tRNA(Leu(uur)) gene at a position immediately adjacent to and downstream of the 16S rRNA gene; this region comprises a tridecamer sequence critical for directing accurate termination. Binds DNA along the major grove and promotes DNA bending and partial unwinding. Promotes base flipping. Transcription termination activity appears to be polarized with highest specificity for transcripts initiated on the light strand. The polypeptide is Transcription termination factor 1b, mitochondrial (Mus musculus (Mouse)).